The chain runs to 617 residues: Chaperone protein DnaK (617 aa).

The segment at 579–617 (KAQQEAQQASGEAGSADARGPDETVVDADYEVVDDEKRK) is disordered. A compositionally biased stretch (low complexity) spans 580–594 (AQQEAQQASGEAGSA). The segment covering 602–617 (TVVDADYEVVDDEKRK) has biased composition (acidic residues).

Belongs to the heat shock protein 70 family.

Its function is as follows. Acts as a chaperone. This is Chaperone protein DnaK from Methanosarcina acetivorans (strain ATCC 35395 / DSM 2834 / JCM 12185 / C2A).